The following is a 98-amino-acid chain: NADH-ubiquinone oxidoreductase chain 4L (98 aa).

Helical transmembrane passes span Met-1–Ile-21, Ser-29–Leu-49, and Val-61–Ile-81.

It belongs to the complex I subunit 4L family. In terms of assembly, core subunit of respiratory chain NADH dehydrogenase (Complex I) which is composed of 45 different subunits.

The protein resides in the mitochondrion inner membrane. It carries out the reaction a ubiquinone + NADH + 5 H(+)(in) = a ubiquinol + NAD(+) + 4 H(+)(out). In terms of biological role, core subunit of the mitochondrial membrane respiratory chain NADH dehydrogenase (Complex I) which catalyzes electron transfer from NADH through the respiratory chain, using ubiquinone as an electron acceptor. Part of the enzyme membrane arm which is embedded in the lipid bilayer and involved in proton translocation. In Hylobates lar (Lar gibbon), this protein is NADH-ubiquinone oxidoreductase chain 4L (MT-ND4L).